We begin with the raw amino-acid sequence, 423 residues long: UDP-N-acetylglucosamine 1-carboxyvinyltransferase (423 aa).

22-23 (KN) is a phosphoenolpyruvate binding site. R98 contributes to the UDP-N-acetyl-alpha-D-glucosamine binding site. C122 acts as the Proton donor in catalysis. Residue C122 is modified to 2-(S-cysteinyl)pyruvic acid O-phosphothioketal. UDP-N-acetyl-alpha-D-glucosamine contacts are provided by residues 127-131 (RPVDQ), D311, and I333.

This sequence belongs to the EPSP synthase family. MurA subfamily.

The protein resides in the cytoplasm. It carries out the reaction phosphoenolpyruvate + UDP-N-acetyl-alpha-D-glucosamine = UDP-N-acetyl-3-O-(1-carboxyvinyl)-alpha-D-glucosamine + phosphate. It participates in cell wall biogenesis; peptidoglycan biosynthesis. Its function is as follows. Cell wall formation. Adds enolpyruvyl to UDP-N-acetylglucosamine. The protein is UDP-N-acetylglucosamine 1-carboxyvinyltransferase of Stenotrophomonas maltophilia (strain K279a).